The sequence spans 333 residues: Tetraacyldisaccharide 4'-kinase (333 aa).

Residue 60-67 (TVGGTGKT) coordinates ATP.

This sequence belongs to the LpxK family.

The enzyme catalyses a lipid A disaccharide + ATP = a lipid IVA + ADP + H(+). The protein operates within glycolipid biosynthesis; lipid IV(A) biosynthesis; lipid IV(A) from (3R)-3-hydroxytetradecanoyl-[acyl-carrier-protein] and UDP-N-acetyl-alpha-D-glucosamine: step 6/6. Transfers the gamma-phosphate of ATP to the 4'-position of a tetraacyldisaccharide 1-phosphate intermediate (termed DS-1-P) to form tetraacyldisaccharide 1,4'-bis-phosphate (lipid IVA). The polypeptide is Tetraacyldisaccharide 4'-kinase (Pseudomonas putida (strain GB-1)).